Consider the following 303-residue polypeptide: Glycine--tRNA ligase alpha subunit (303 aa).

The protein belongs to the class-II aminoacyl-tRNA synthetase family. Tetramer of two alpha and two beta subunits.

It is found in the cytoplasm. The enzyme catalyses tRNA(Gly) + glycine + ATP = glycyl-tRNA(Gly) + AMP + diphosphate. This Klebsiella pneumoniae subsp. pneumoniae (strain ATCC 700721 / MGH 78578) protein is Glycine--tRNA ligase alpha subunit.